Consider the following 396-residue polypeptide: Probable sugar efflux transporter (396 aa).

Transmembrane regions (helical) follow at residues valine 15 to leucine 35, valine 50 to leucine 70, leucine 81 to phenylalanine 101, valine 103 to alanine 123, alanine 136 to leucine 156, phenylalanine 170 to leucine 190, proline 209 to tyrosine 229, phenylalanine 246 to glycine 266, threonine 275 to alanine 295, isoleucine 299 to methionine 319, valine 333 to glycine 353, and methionine 364 to phenylalanine 384.

Belongs to the major facilitator superfamily. SotB (TC 2.A.1.2) family.

The protein resides in the cell inner membrane. Functionally, involved in the efflux of sugars. The physiological role may be the reduction of the intracellular concentration of toxic sugars or sugar metabolites. The polypeptide is Probable sugar efflux transporter (Escherichia coli (strain SMS-3-5 / SECEC)).